Here is a 74-residue protein sequence, read N- to C-terminus: U4-theraphotoxin-Cg1a (74 aa).

The N-terminal stretch at 1-19 (MNATIFALLLLLNLAMHNA) is a signal peptide. A propeptide spanning residues 20–39 (AEQSSETDMDDTLLIPEINR) is cleaved from the precursor. 3 cysteine pairs are disulfide-bonded: C42/C56, C49/C61, and C55/C71.

The protein belongs to the neurotoxin 36 family. 01 subfamily. As to expression, expressed by the venom gland.

It is found in the secreted. In terms of biological role, probable ion channel inhibitor. This Chilobrachys guangxiensis (Chinese earth tiger tarantula) protein is U4-theraphotoxin-Cg1a.